The sequence spans 154 residues: uncharacterized protein (154 aa).

A helical transmembrane segment spans residues 23–43 (SAVALVTFAGAALSGVIPAIA).

It localises to the membrane. This is an uncharacterized protein from Mycobacterium tuberculosis (strain CDC 1551 / Oshkosh).